Reading from the N-terminus, the 93-residue chain is Histone H2B (93 aa).

Over residues Met-1–Lys-12 the composition is skewed to low complexity. A disordered region spans residues Met-1–Xaa-31. Lys-6 and Lys-13 each carry N6-acetyllysine. The span at Lys-13 to Lys-28 shows a compositional bias: basic residues. At Ser-15 the chain carries Phosphoserine. 2 positions are modified to N6-acetyllysine: Lys-16 and Lys-21.

This sequence belongs to the histone H2B family. In terms of assembly, the nucleosome is a histone octamer containing two molecules each of H2A, H2B, H3 and H4 assembled in one H3-H4 heterotetramer and two H2A-H2B heterodimers. The octamer wraps approximately 147 bp of DNA. Post-translationally, monoubiquitination at the C-terminal Lys gives a specific tag for epigenetic transcriptional activation and is also prerequisite for histone H3 'Lys-4' and 'Lys-79' methylation. Phosphorylated on Ser-15 during apoptosis; which facilitates apoptotic chromatin condensation.

The protein resides in the nucleus. It localises to the chromosome. Core component of nucleosome. Nucleosomes wrap and compact DNA into chromatin, limiting DNA accessibility to the cellular machineries which require DNA as a template. Histones thereby play a central role in transcription regulation, DNA repair, DNA replication and chromosomal stability. DNA accessibility is regulated via a complex set of post-translational modifications of histones, also called histone code, and nucleosome remodeling. In Crocodylus niloticus (Nile crocodile), this protein is Histone H2B.